The sequence spans 145 residues: 3-hydroxyacyl-[acyl-carrier-protein] dehydratase FabZ (145 aa).

His51 is a catalytic residue.

This sequence belongs to the thioester dehydratase family. FabZ subfamily.

It is found in the cytoplasm. It carries out the reaction a (3R)-hydroxyacyl-[ACP] = a (2E)-enoyl-[ACP] + H2O. Its function is as follows. Involved in unsaturated fatty acids biosynthesis. Catalyzes the dehydration of short chain beta-hydroxyacyl-ACPs and long chain saturated and unsaturated beta-hydroxyacyl-ACPs. The chain is 3-hydroxyacyl-[acyl-carrier-protein] dehydratase FabZ from Staphylococcus epidermidis (strain ATCC 35984 / DSM 28319 / BCRC 17069 / CCUG 31568 / BM 3577 / RP62A).